The primary structure comprises 276 residues: MPEMPEVETVRRTLLPLIKGKTIEKVVLWYPTIVATDHDEFLKELPGKKIIGIDRYAKYLLIRLSDNLTIVSHLRMEGKYHLTTEDAPKDKHDHVEFVFTDKTALRYNDVRKFGRMQLIITGTERQVTGIKKLGPEPNTSEFSQQYLIDNLKKKHKNIKNVLLDQTTVAGLGNIYVDETLWQSKIHPLSIANKIPAKKVAGLWENINQTIALAIEKRGTTVHSYLDANGEVGGYQEMLQVYGHVGEECPRCGNIFEKIKVSGRGTTFCPHCQVIYK.

P2 acts as the Schiff-base intermediate with DNA in catalysis. Residue E3 is the Proton donor of the active site. K58 serves as the catalytic Proton donor; for beta-elimination activity. H92, R111, and K154 together coordinate DNA. The segment at 239–273 adopts an FPG-type zinc-finger fold; sequence QVYGHVGEECPRCGNIFEKIKVSGRGTTFCPHCQV. R263 functions as the Proton donor; for delta-elimination activity in the catalytic mechanism.

It belongs to the FPG family. In terms of assembly, monomer. Zn(2+) is required as a cofactor.

The enzyme catalyses Hydrolysis of DNA containing ring-opened 7-methylguanine residues, releasing 2,6-diamino-4-hydroxy-5-(N-methyl)formamidopyrimidine.. It carries out the reaction 2'-deoxyribonucleotide-(2'-deoxyribose 5'-phosphate)-2'-deoxyribonucleotide-DNA = a 3'-end 2'-deoxyribonucleotide-(2,3-dehydro-2,3-deoxyribose 5'-phosphate)-DNA + a 5'-end 5'-phospho-2'-deoxyribonucleoside-DNA + H(+). Its function is as follows. Involved in base excision repair of DNA damaged by oxidation or by mutagenic agents. Acts as a DNA glycosylase that recognizes and removes damaged bases. Has a preference for oxidized purines, such as 7,8-dihydro-8-oxoguanine (8-oxoG). Has AP (apurinic/apyrimidinic) lyase activity and introduces nicks in the DNA strand. Cleaves the DNA backbone by beta-delta elimination to generate a single-strand break at the site of the removed base with both 3'- and 5'-phosphates. The sequence is that of Formamidopyrimidine-DNA glycosylase from Lactobacillus acidophilus (strain ATCC 700396 / NCK56 / N2 / NCFM).